Here is a 315-residue protein sequence, read N- to C-terminus: Uracil-DNA glycosylase (315 aa).

Residues 35–80 (AAAAAPAGAGAGASKPARPPAAARPAKGTPAASAATTATGADASAP) show a composition bias toward low complexity. A disordered region spans residues 35–88 (AAAAAPAGAGAGASKPARPPAAARPAKGTPAASAATTATGADASAPAPDPGAPT). Catalysis depends on Asp-158, which acts as the Proton acceptor.

It belongs to the uracil-DNA glycosylase (UDG) superfamily. UNG family.

It localises to the host nucleus. The catalysed reaction is Hydrolyzes single-stranded DNA or mismatched double-stranded DNA and polynucleotides, releasing free uracil.. Excises uracil residues from the DNA which can arise as a result of misincorporation of dUMP residues by DNA polymerase or deamination of cytosines. Therefore may reduce deleterious uracil incorporation into the viral genome, particularly in terminally differentiated cells which lack DNA repair enzymes. The polypeptide is Uracil-DNA glycosylase (UL2) (Suid herpesvirus 1 (strain Indiana-Funkhauser / Becker) (SuHV-1)).